We begin with the raw amino-acid sequence, 240 residues long: Homeobox-leucine zipper protein HOX14 (240 aa).

Residues 26–64 form a disordered region; sequence SGEVQGERPRARRRRRRGARCVGGGGGGGEVDGGDPKKR. Basic residues predominate over residues 35 to 44; sequence RARRRRRRGA. A compositionally biased stretch (gly residues) spans 46–56; it reads CVGGGGGGGEV. Residues 59-118 constitute a DNA-binding region (homeobox); that stretch reads GDPKKRRLSDEQVEMLELSFREERKLETGRKVHLASELGLDPKQVAVWFQNRRARHKSKL. A coiled-coil region spans residues 108–167; it reads QNRRARHKSKLLEEEFSKLKHAHDAAILHKCHLENEVLRLKERLVVAEEEVRRLRSAAGS.

It belongs to the HD-ZIP homeobox family. Class I subfamily. As to expression, expressed in roots, stems, leaf blades and panicles.

The protein localises to the nucleus. Probable transcription factor. This is Homeobox-leucine zipper protein HOX14 (HOX14) from Oryza sativa subsp. japonica (Rice).